The following is a 760-amino-acid chain: MVDVQKRKKLLAKAAASASIPAIKGSVPLDSYDIKIIQYKNALYKLNELNRLLNVLVPHLKKKRDNDESYKIIPLVNFILSLCEGPIFNVSPVLAKRYHLLCRFQLIKLSEVQQRLSTNFIDVEGWMFPEEVPLDHYKSCIYNNSLQWKILNSLSCIAQNAIKIYNAKLRQILLERDAYKARSLPFDTSIIEDLLNPVEMTLILDLAVLINDPVRDKSTHSFYKLQWQVMEKLNSCVHSKIFPILRTYYNQLQKFSETRPTSLSNLQKDLPHWEWTLHRIYTFHLRVFSVLCVIISFSRQIFLPNKQHFLDIKTRLSSENVYHYDLIICELMALLSPECDDVTALFELQENLKFWTQTARTDNNSSRTPIFHLQPGLVVELFNNHICKIIPKLRSIMGLLSNWMDCWKYIEKNYKTFDETNDLRENLKEKLERDKALYLEVKNAKSKLKKKPSITKLPASSSPSPSPTSSASPSRQASLESIRTRARAHLASNSSRSPSVSPVRTTFNNKNAETKKSVVSPEKRKLINGRRPRSSSLQSYTNKQQTSYLNSTRHPSIAPPSKLNNQRSNSLQSSTMTLNQKIVQDTVRHLMNKSASTPNPSASSSLAPSPKVSSINNTSSGKSSSTLIANSSDTLAIETLTLDPESNSSELSIKRVRFAGVPPMTEAENPKPTKVGWYKKPAVLHYPPIPASAMIKPLQHKSKYNTLRQEEGFTFRKSLRDGLEWENGESGSETTMMPFGIEIKESTGHRIASKIRSKLR.

Disordered stretches follow at residues lysine 449–serine 573 and lysine 593–threonine 626. Composition is skewed to low complexity over residues isoleucine 454–serine 474 and serine 494–threonine 506. Phosphoserine occurs at positions 497 and 501. Residues alanine 512–lysine 525 show a composition bias toward basic and acidic residues. Residues serine 534–histidine 554 show a composition bias toward polar residues. Composition is skewed to low complexity over residues serine 561–serine 573 and serine 594–threonine 626. At serine 609 the chain carries Phosphoserine.

The protein belongs to the GIP4 family. In terms of assembly, interacts with GLC7.

It localises to the cytoplasm. Its function is as follows. GLC7 phosphatase-regulatory protein involved in GLC7 subcellular redistribution and chromosome segregation. In Saccharomyces cerevisiae (strain ATCC 204508 / S288c) (Baker's yeast), this protein is GLC7-interacting protein 4 (GIP4).